The primary structure comprises 425 residues: MAFLALGINHKTASVDVRERVAFTPEQLVDALQQLCHLTESREAAILSTCNRSELYIEHEHLGADSILAWLANYHHLSLEELRASAYVHEDDAAVRHMMRVASGLDSLVLGEPQILGQMKSAYAVAREAGTVGPLLGRLFQATFSAAKQVRTDTAIGENPVSVAFAAVSLAKQIFSDLQRSQALLIGAGETITLVARHLHDLGVKRIVVANRTLERASILAAEFGAHAVLLSDIPAELVNSDIVISSTASQLPILGKGAVESALKLRKHKPIFMVDIAVPRDIEPEVGELDDVYLYSVDDLHEVVAENLKSRQGAALAAEQLVSVGAEDFMSRLRELAAVDVLRAYRQQSERLRDEELSKAQRMLANGSNAEDVLIQLARGLTNKLLHAPSVQLKKLSAEGRVDALAMAQELFALGEGSTDKTPQ.

Residues 49–52, S107, 112–114, and Q118 each bind substrate; these read TCNR and EPQ. The Nucleophile role is filled by C50. 187–192 contacts NADP(+); that stretch reads GAGETI.

It belongs to the glutamyl-tRNA reductase family. In terms of assembly, homodimer.

The enzyme catalyses (S)-4-amino-5-oxopentanoate + tRNA(Glu) + NADP(+) = L-glutamyl-tRNA(Glu) + NADPH + H(+). It functions in the pathway porphyrin-containing compound metabolism; protoporphyrin-IX biosynthesis; 5-aminolevulinate from L-glutamyl-tRNA(Glu): step 1/2. Catalyzes the NADPH-dependent reduction of glutamyl-tRNA(Glu) to glutamate 1-semialdehyde (GSA). This Pseudomonas syringae pv. tomato (strain ATCC BAA-871 / DC3000) protein is Glutamyl-tRNA reductase.